We begin with the raw amino-acid sequence, 441 residues long: Xylose isomerase (441 aa).

Residues His100 and Asp103 contribute to the active site. Mg(2+) is bound by residues Glu231, Glu267, His270, Asp295, Asp306, Asp308, and Asp338.

This sequence belongs to the xylose isomerase family. In terms of assembly, homotetramer. Mg(2+) serves as cofactor.

The protein localises to the cytoplasm. The enzyme catalyses alpha-D-xylose = alpha-D-xylulofuranose. The polypeptide is Xylose isomerase (Paraburkholderia phymatum (strain DSM 17167 / CIP 108236 / LMG 21445 / STM815) (Burkholderia phymatum)).